A 288-amino-acid chain; its full sequence is tRNA-cytidine(32) 2-sulfurtransferase (288 aa).

The short motif at 70 to 75 (SGGKDS) is the PP-loop motif element. 3 residues coordinate [4Fe-4S] cluster: C145, C148, and C236.

This sequence belongs to the TtcA family. As to quaternary structure, homodimer. The cofactor is Mg(2+). [4Fe-4S] cluster serves as cofactor.

The protein resides in the cytoplasm. It carries out the reaction cytidine(32) in tRNA + S-sulfanyl-L-cysteinyl-[cysteine desulfurase] + AH2 + ATP = 2-thiocytidine(32) in tRNA + L-cysteinyl-[cysteine desulfurase] + A + AMP + diphosphate + H(+). It functions in the pathway tRNA modification. In terms of biological role, catalyzes the ATP-dependent 2-thiolation of cytidine in position 32 of tRNA, to form 2-thiocytidine (s(2)C32). The sulfur atoms are provided by the cysteine/cysteine desulfurase (IscS) system. This Bartonella tribocorum (strain CIP 105476 / IBS 506) protein is tRNA-cytidine(32) 2-sulfurtransferase.